A 141-amino-acid polypeptide reads, in one-letter code: Large ribosomal subunit protein uL11 (141 aa).

It belongs to the universal ribosomal protein uL11 family. In terms of assembly, part of the ribosomal stalk of the 50S ribosomal subunit. Interacts with L10 and the large rRNA to form the base of the stalk. L10 forms an elongated spine to which L12 dimers bind in a sequential fashion forming a multimeric L10(L12)X complex. In terms of processing, one or more lysine residues are methylated.

Forms part of the ribosomal stalk which helps the ribosome interact with GTP-bound translation factors. The polypeptide is Large ribosomal subunit protein uL11 (Chlamydia trachomatis serovar A (strain ATCC VR-571B / DSM 19440 / HAR-13)).